A 145-amino-acid polypeptide reads, in one-letter code: D-aminoacyl-tRNA deacylase (145 aa).

The Gly-cisPro motif, important for rejection of L-amino acids motif lies at 137-138 (GP).

The protein belongs to the DTD family. In terms of assembly, homodimer.

The protein resides in the cytoplasm. The enzyme catalyses glycyl-tRNA(Ala) + H2O = tRNA(Ala) + glycine + H(+). The catalysed reaction is a D-aminoacyl-tRNA + H2O = a tRNA + a D-alpha-amino acid + H(+). An aminoacyl-tRNA editing enzyme that deacylates mischarged D-aminoacyl-tRNAs. Also deacylates mischarged glycyl-tRNA(Ala), protecting cells against glycine mischarging by AlaRS. Acts via tRNA-based rather than protein-based catalysis; rejects L-amino acids rather than detecting D-amino acids in the active site. By recycling D-aminoacyl-tRNA to D-amino acids and free tRNA molecules, this enzyme counteracts the toxicity associated with the formation of D-aminoacyl-tRNA entities in vivo and helps enforce protein L-homochirality. The sequence is that of D-aminoacyl-tRNA deacylase from Escherichia coli O139:H28 (strain E24377A / ETEC).